A 376-amino-acid polypeptide reads, in one-letter code: Alpha-2,8-sialyltransferase 8E (376 aa).

The Cytoplasmic portion of the chain corresponds to 1–17 (MRYADPSANRDLLGSRT). A helical; Signal-anchor for type II membrane protein transmembrane segment spans residues 18 to 38 (LLFIFICAFALVTLLQQILYG). Topologically, residues 39-376 (RNYIKRYFEF…RVHTGTCSCC (338 aa)) are lumenal. Residues N56 and N96 are each glycosylated (N-linked (GlcNAc...) asparagine). Intrachain disulfides connect C164/C313 and C178/C373. Substrate-binding positions include N192 and 214 to 216 (NPS). N-linked (GlcNAc...) asparagine glycosylation is found at N241 and N284. 300 to 302 (STG) is a substrate binding site. Catalysis depends on H348, which acts as the Proton donor/acceptor.

This sequence belongs to the glycosyltransferase 29 family. In terms of tissue distribution, expressed in fetal and adult brain, adult heart and skeletal muscle. Expressed in fetal and adult brain, not detected in adult heart and skeletal muscle.

The protein resides in the golgi apparatus membrane. The enzyme catalyses a ganglioside GT1b (d18:1(4E)) + CMP-N-acetyl-beta-neuraminate = a ganglioside GQ1b (d18:1(4E)) + CMP + H(+). The catalysed reaction is a ganglioside GD3 (d18:1(4E)) + CMP-N-acetyl-beta-neuraminate = a ganglioside GT3 (d18:1(4E)) + CMP + H(+). It catalyses the reaction a ganglioside GD1a (d18:1(4E)) + CMP-N-acetyl-beta-neuraminate = a ganglioside GT1a (d18:1(4E)) + CMP + H(+). It carries out the reaction a ganglioside GM1b (d18:1(4E)) + CMP-N-acetyl-beta-neuraminate = a ganglioside GD1c (d18:1(4E)) + CMP + H(+). The enzyme catalyses a ganglioside GQ1c (d18:1(4E)) + CMP-N-acetyl-beta-neuraminate = a ganglioside GP1c (d18:1(4E)) + CMP + H(+). It functions in the pathway protein modification; protein glycosylation. In terms of biological role, involved in the synthesis of gangliosides GD1c, GT1a, GQ1b, GP1c and GT3 from GD1a, GT1b, GM1b and GD3 respectively. The polypeptide is Alpha-2,8-sialyltransferase 8E (Homo sapiens (Human)).